Here is a 712-residue protein sequence, read N- to C-terminus: Polyribonucleotide nucleotidyltransferase (712 aa).

Mg(2+)-binding residues include Asp-485 and Asp-491. Residues 552–611 enclose the KH domain; sequence PKITTISVPKEKIRDVIGQGGKVIREIVEYSGAKIDINDDGTIMIAASSEDQATRAIERI. In terms of domain architecture, S1 motif spans 621–689; it reads GAIYTGKVVK…DRGKVKLSMR (69 aa).

This sequence belongs to the polyribonucleotide nucleotidyltransferase family. The cofactor is Mg(2+).

It localises to the cytoplasm. The enzyme catalyses RNA(n+1) + phosphate = RNA(n) + a ribonucleoside 5'-diphosphate. Functionally, involved in mRNA degradation. Catalyzes the phosphorolysis of single-stranded polyribonucleotides processively in the 3'- to 5'-direction. The sequence is that of Polyribonucleotide nucleotidyltransferase from Gluconacetobacter diazotrophicus (strain ATCC 49037 / DSM 5601 / CCUG 37298 / CIP 103539 / LMG 7603 / PAl5).